Reading from the N-terminus, the 241-residue chain is Translation initiation factor IF-3 (241 aa).

The disordered stretch occupies residues 178–241 (KKTEAMAEAR…EAPAEASTEA (64 aa)). The segment covering 180 to 197 (TEAMAEAREAQAARKAEA) has biased composition (basic and acidic residues). Residues 208-229 (ADEDIPEGELPEGEVPEAETTE) are compositionally biased toward acidic residues. Low complexity predominate over residues 230 to 241 (AAEAPAEASTEA).

This sequence belongs to the IF-3 family. As to quaternary structure, monomer.

Its subcellular location is the cytoplasm. IF-3 binds to the 30S ribosomal subunit and shifts the equilibrium between 70S ribosomes and their 50S and 30S subunits in favor of the free subunits, thus enhancing the availability of 30S subunits on which protein synthesis initiation begins. In Streptomyces avermitilis (strain ATCC 31267 / DSM 46492 / JCM 5070 / NBRC 14893 / NCIMB 12804 / NRRL 8165 / MA-4680), this protein is Translation initiation factor IF-3.